Reading from the N-terminus, the 245-residue chain is Probable ABC transporter permease protein HI_0355 (245 aa).

6 helical membrane-spanning segments follow: residues 9–29 (LLIV…GSFP), 61–81 (ICLG…LLSF), 92–112 (ILVI…VLWF), 115–135 (GMAS…TAAC), 170–190 (LPAF…GAVV), and 217–237 (FAAL…IDWL). One can recognise an ABC transmembrane type-1 domain in the interval 50–234 (LWQHTQVTLL…SISLCLYFSI (185 aa)).

This sequence belongs to the binding-protein-dependent transport system permease family. CysTW subfamily.

It is found in the cell inner membrane. Its function is as follows. Probably part of a binding-protein-dependent transport system. Probably responsible for the translocation of the substrate across the membrane. In Haemophilus influenzae (strain ATCC 51907 / DSM 11121 / KW20 / Rd), this protein is Probable ABC transporter permease protein HI_0355.